Reading from the N-terminus, the 397-residue chain is Lysophospholipid transporter LplT (397 aa).

Over 1 to 17 (MSESVHTNTSLWSKGMK) the chain is Periplasmic. Residues 18–38 (AVIVAQFLSAFGDNALLFATL) form a helical membrane-spanning segment. Over 39–52 (ALLKAQFYPEWSQP) the chain is Cytoplasmic. The chain crosses the membrane as a helical span at residues 53 to 73 (ILQMVFVGAYILFAPFVGQVA). Residues 74–90 (DSFAKGRVMMFANGLKL) are Periplasmic-facing. The helical transmembrane segment at 91–111 (LGAASICFGINPFLGYTLVGV) threads the bilayer. At 112–144 (GAAAYSPAKYGILGELTTGSKLVKANGLMEAST) the chain is on the cytoplasmic side. The chain crosses the membrane as a helical span at residues 145–165 (IAAILLGSVAGGVLADWHVLV). Residue Ala-166 is a topological domain, periplasmic. Residues 167-187 (LAACALAYGGAVVANIYIPKL) form a helical membrane-spanning segment. The Cytoplasmic portion of the chain corresponds to 188 to 226 (AAARPGQSWNLINMTRSFLNACTSLWRNGETRFSLVGTS). Residues 227 to 247 (LFWGAGVTLRFLLVLWVPVAL) traverse the membrane as a helical segment. Topologically, residues 248 to 256 (GITDNATPT) are periplasmic. A helical transmembrane segment spans residues 257 to 277 (YLNAMVAIGIVVGAGAAAKLV). Over 278–280 (TLE) the chain is Cytoplasmic. A helical transmembrane segment spans residues 281–301 (TVSRCMPAGILIGVVVLIFSL). Residues 302–304 (QHE) lie on the Periplasmic side of the membrane. Residues 305–325 (LLPAYALLMLIGVLGGFFVVP) form a helical membrane-spanning segment. The Cytoplasmic segment spans residues 326 to 343 (LNALLQERGKKSVGAGNA). A helical transmembrane segment spans residues 344-364 (IAVQNLGENSAMLLMLGIYSL). Over 365 to 366 (AV) the chain is Periplasmic. The helical transmembrane segment at 367-387 (MVGIPVVPIGIGFGTLFALAI) threads the bilayer. Over 388-397 (TALWIWQRRH) the chain is Cytoplasmic.

Belongs to the major facilitator superfamily. LplT (TC 2.A.1.42) family.

The protein resides in the cell inner membrane. Functionally, catalyzes the facilitated diffusion of 2-acyl-glycero-3-phosphoethanolamine (2-acyl-GPE) into the cell. The chain is Lysophospholipid transporter LplT from Escherichia coli O9:H4 (strain HS).